A 574-amino-acid polypeptide reads, in one-letter code: Putative diflavin flavoprotein A 3 (574 aa).

Residues 43–236 (QNGTTYNSFL…PSVKMIATGH (194 aa)) form a zinc metallo-hydrolase region. Positions 92, 94, 96, 159, 178, and 236 each coordinate Fe cation. The Flavodoxin-like domain occupies 265-409 (IGVFYVSEYG…DLGQWVTRDR (145 aa)). The segment at 410 to 574 (SIKAMKSLGA…VHHRKVGNHY (165 aa)) is flavodoxin-reductase-like.

In the N-terminal section; belongs to the zinc metallo-hydrolase group 3 family. This sequence in the C-terminal section; belongs to the flavodoxin reductase family. Fe cation is required as a cofactor.

Its function is as follows. Mediates electron transfer from NADH to oxygen, reducing it to water. This modular protein has 3 redox cofactors, in other organisms the same activity requires 2 or 3 proteins. The protein is Putative diflavin flavoprotein A 3 (dfa3) of Nostoc sp. (strain PCC 7120 / SAG 25.82 / UTEX 2576).